The following is a 515-amino-acid chain: Envelope glycoprotein (515 aa).

Positions 1-33 (MPKERRSRRRPEPIIRWVSLTLTLLALCQPIQT) are cleaved as a signal peptide. The Extracellular segment spans residues 34 to 435 (WRCSLSLGNQ…LGLTAWVRET (402 aa)). Asn-129 and Asn-203 each carry an N-linked (GlcNAc...) asparagine; by host glycan. The short motif at 212–215 (CAIC) is the CXXC element. Intrachain disulfides connect Cys-212–Cys-215, Cys-212–Cys-392, and Cys-384–Cys-391. N-linked (GlcNAc...) asparagine; by host glycans are attached at residues Asn-230, Asn-251, Asn-256, Asn-271, and Asn-287. The fusion peptide stretch occupies residues 304–324 (VAALTLGLALSVGLTGIKVAV). 2 coiled-coil regions span residues 330–376 (QRLT…WLYI) and 388–420 (NEPC…DWQW). Residue Asn-351 is glycosylated (N-linked (GlcNAc...) asparagine; by host). The interval 365-381 (AQNRRGLDWLYIRLGFQ) is immunosuppression. A CX6CC motif is present at residues 384–392 (CPTINEPCC). A glycan (N-linked (GlcNAc...) asparagine; by host) is linked at Asn-398. A helical membrane pass occupies residues 436 to 456 (IHSVLSLFLLALLLLFLAPCL). Cys-455 carries S-palmitoyl cysteine; by host lipidation. Residues 457 to 515 (IKCLTSRLSKLLRQAPHFPEISFPPKPDSDYQALLPSAPEIYSHLSPTKPDYINLRPCP) lie on the Cytoplasmic side of the membrane.

As to quaternary structure, the mature envelope protein (Env) consists of a trimer of SU-TM heterodimers attached by a labile interchain disulfide bond. Specific enzymatic cleavages in vivo yield mature proteins. Envelope glycoproteins are synthesized as an inactive precursor that is N-glycosylated and processed likely by host cell furin or by a furin-like protease in the Golgi to yield the mature SU and TM proteins. The cleavage site between SU and TM requires the minimal sequence [KR]-X-[KR]-R. In terms of processing, the CXXC motif is highly conserved across a broad range of retroviral envelope proteins. It is thought to participate in the formation of a labile disulfide bond possibly with the CX6CC motif present in the transmembrane protein. Isomerization of the intersubunit disulfide bond to an SU intrachain disulfide bond is thought to occur upon receptor recognition in order to allow membrane fusion. Post-translationally, the transmembrane protein is palmitoylated.

The protein localises to the virion membrane. It localises to the host cell membrane. The surface protein (SU) attaches the virus to the host cell by binding to its receptor. This interaction triggers the refolding of the transmembrane protein (TM) and is thought to activate its fusogenic potential by unmasking its fusion peptide. Fusion occurs at the host cell plasma membrane. Its function is as follows. The transmembrane protein (TM) acts as a class I viral fusion protein. Under the current model, the protein has at least 3 conformational states: pre-fusion native state, pre-hairpin intermediate state, and post-fusion hairpin state. During viral and target cell membrane fusion, the coiled coil regions (heptad repeats) assume a trimer-of-hairpins structure, positioning the fusion peptide in close proximity to the C-terminal region of the ectodomain. The formation of this structure appears to drive apposition and subsequent fusion of viral and target cell membranes. Membranes fusion leads to delivery of the nucleocapsid into the cytoplasm. This Bovine leukemia virus (isolate Australian) (BLV) protein is Envelope glycoprotein (env).